The primary structure comprises 411 residues: Small ribosomal subunit protein bS1c (411 aa).

Residues methionine 1–serine 41 constitute a chloroplast transit peptide. S1 motif domains are found at residues glycine 96–arginine 166, aspartate 184–arginine 248, and glycine 261–lysine 329.

The protein belongs to the bacterial ribosomal protein bS1 family. In terms of assembly, component of the chloroplast small ribosomal subunit (SSU). Mature 70S chloroplast ribosomes of higher plants consist of a small (30S) and a large (50S) subunit. The 30S small subunit contains 1 molecule of ribosomal RNA (16S rRNA) and 24 different proteins. The 50S large subunit contains 3 rRNA molecules (23S, 5S and 4.5S rRNA) and 33 different proteins.

The protein resides in the plastid. It localises to the chloroplast. In terms of biological role, component of the chloroplast ribosome (chloro-ribosome), a dedicated translation machinery responsible for the synthesis of chloroplast genome-encoded proteins, including proteins of the transcription and translation machinery and components of the photosynthetic apparatus. Actively engaged in the initiation complex formation via a strong mRNA-binding activity. Possesses a poly(A)-binding activity which might play a role as a control element in chloroplast mRNA translation. The sequence is that of Small ribosomal subunit protein bS1c (RPS1) from Spinacia oleracea (Spinach).